The chain runs to 268 residues: Undecaprenyl-diphosphatase (268 aa).

The next 7 membrane-spanning stretches (helical) occupy residues 47–67, 83–103, 109–129, 144–164, 184–204, 218–238, and 246–266; these read FAILIQLGAILAIVALYFFKL, FIIGVLIAFLPAVIIGLIAGK, LFDPWVVCFSLIVGGAILLWV, YPLMMYLWIGVAQCLAMIPGV, AAEFSFFLAIPTMVGAFVYDF, LIAIGFVVSFITAMIVVKAFL, and FVLFAWWRVIVGTLGLIALAL.

This sequence belongs to the UppP family.

Its subcellular location is the cell inner membrane. The catalysed reaction is di-trans,octa-cis-undecaprenyl diphosphate + H2O = di-trans,octa-cis-undecaprenyl phosphate + phosphate + H(+). In terms of biological role, catalyzes the dephosphorylation of undecaprenyl diphosphate (UPP). Confers resistance to bacitracin. The polypeptide is Undecaprenyl-diphosphatase (Bradyrhizobium sp. (strain ORS 278)).